Consider the following 493-residue polypeptide: Trigger factor (493 aa).

The region spanning 169–254 is the PPIase FKBP-type domain; sequence GDRVTMDYLG…VKEVAAPAET (86 aa). The disordered stretch occupies residues 439-493; the sequence is ELLAEDEDGDDTKPAKKSAKKKAAKAEDASAEGEEAAPKKKAAAKKKAADEGDAE.

The protein belongs to the FKBP-type PPIase family. Tig subfamily.

It is found in the cytoplasm. The enzyme catalyses [protein]-peptidylproline (omega=180) = [protein]-peptidylproline (omega=0). Its function is as follows. Involved in protein export. Acts as a chaperone by maintaining the newly synthesized protein in an open conformation. Functions as a peptidyl-prolyl cis-trans isomerase. The chain is Trigger factor from Allorhizobium ampelinum (strain ATCC BAA-846 / DSM 112012 / S4) (Agrobacterium vitis (strain S4)).